The chain runs to 431 residues: Enolase (431 aa).

Q167 serves as a coordination point for (2R)-2-phosphoglycerate. Residue E209 is the Proton donor of the active site. D246, E289, and D316 together coordinate Mg(2+). K341, R370, S371, and K392 together coordinate (2R)-2-phosphoglycerate. The Proton acceptor role is filled by K341.

It belongs to the enolase family. As to quaternary structure, component of the RNA degradosome, a multiprotein complex involved in RNA processing and mRNA degradation. Requires Mg(2+) as cofactor.

It is found in the cytoplasm. The protein localises to the secreted. It localises to the cell surface. It carries out the reaction (2R)-2-phosphoglycerate = phosphoenolpyruvate + H2O. It functions in the pathway carbohydrate degradation; glycolysis; pyruvate from D-glyceraldehyde 3-phosphate: step 4/5. Functionally, catalyzes the reversible conversion of 2-phosphoglycerate (2-PG) into phosphoenolpyruvate (PEP). It is essential for the degradation of carbohydrates via glycolysis. The polypeptide is Enolase (Hahella chejuensis (strain KCTC 2396)).